We begin with the raw amino-acid sequence, 282 residues long: MSSSLQELCRKNLPDDILPEFFDDYVLQLLGLHWQDHGSLQRTGKNQVLVQQEPIHINEALKVAASEGNFEIVELLLSWKADPRYAVVGALESKYYDLVYKYYNLIEDRHDMLPLIQNSETFERCHELNNCSLKCLFKHAVIYDKLPILQKYADYLDGWPYCNQMLFELACKKQKYNMVVWIEGVLGVGNFTILFTIAIIKRDLQLYSLGYSIILERMYSCGYDPTFLLNHYLRVVSTKGLLPFVLKTIEYGGSKEIAITLAKKYQHETILRYFETRKSQEC.

It belongs to the asfivirus MGF 505 family.

In terms of biological role, plays a role in virus cell tropism, and may be required for efficient virus replication in macrophages. The chain is Protein MGF 505-3R from Ornithodoros (relapsing fever ticks).